Consider the following 495-residue polypeptide: NADP/NAD-dependent aldehyde dehydrogenase PuuC (495 aa).

244 to 249 (GSTRTG) lines the NAD(+) pocket. Active-site residues include Glu267 and Cys302.

The protein belongs to the aldehyde dehydrogenase family.

It carries out the reaction an aldehyde + NADP(+) + H2O = a carboxylate + NADPH + 2 H(+). It catalyses the reaction an aldehyde + NAD(+) + H2O = a carboxylate + NADH + 2 H(+). The enzyme catalyses 4-(gamma-L-glutamylamino)butanal + NADP(+) + H2O = 4-(gamma-L-glutamylamino)butanoate + NADPH + 2 H(+). The catalysed reaction is 4-(gamma-L-glutamylamino)butanal + NAD(+) + H2O = 4-(gamma-L-glutamylamino)butanoate + NADH + 2 H(+). It functions in the pathway amine and polyamine degradation; putrescine degradation; 4-aminobutanoate from putrescine: step 3/4. Its activity is regulated as follows. Lithium ions exhibits the highest inhibition (97%). To a lesser extent (5-20%), potassium, sodium, and ammonium ions also inhibit PuuC activity. Transition metals, such as copper and zinc ions inhibit PuuC activity by more than 90%. The presence of heavy metals (mercury, silver) or sodium hydrogensulfite in the reaction mixture completely inactivate PuuC; in contrast, disulfide reductants such as DTT and 2-mercaptoethanol significantly increase its activity by 75% and 27%, respectively. Functionally, catalyzes the oxidation of 3-hydroxypropionaldehyde (3-HPA) to 3-hydroxypropionic acid (3-HP). It acts preferentially with NAD but can also use NADP. 3-HPA appears to be the most suitable substrate for PuuC followed by isovaleraldehyde, propionaldehyde, butyraldehyde, and valeraldehyde. It might play a role in propionate and/or acetic acid metabolisms. Also involved in the breakdown of putrescine through the oxidation of gamma-Glu-gamma-aminobutyraldehyde to gamma-Glu-gamma-aminobutyrate (gamma-Glu-GABA). This is NADP/NAD-dependent aldehyde dehydrogenase PuuC from Escherichia coli (strain K12).